We begin with the raw amino-acid sequence, 491 residues long: Proline--tRNA ligase (491 aa).

It belongs to the class-II aminoacyl-tRNA synthetase family. ProS type 3 subfamily. Homodimer.

The protein localises to the cytoplasm. The catalysed reaction is tRNA(Pro) + L-proline + ATP = L-prolyl-tRNA(Pro) + AMP + diphosphate. Its function is as follows. Catalyzes the attachment of proline to tRNA(Pro) in a two-step reaction: proline is first activated by ATP to form Pro-AMP and then transferred to the acceptor end of tRNA(Pro). This chain is Proline--tRNA ligase, found in Cytophaga hutchinsonii (strain ATCC 33406 / DSM 1761 / CIP 103989 / NBRC 15051 / NCIMB 9469 / D465).